Consider the following 196-residue polypeptide: Imidazole glycerol phosphate synthase subunit HisH (196 aa).

A Glutamine amidotransferase type-1 domain is found at 2–196 (NVVILDTGCA…AQLLKNFLEM (195 aa)). Cys77 serves as the catalytic Nucleophile. Catalysis depends on residues His178 and Glu180.

As to quaternary structure, heterodimer of HisH and HisF.

The protein localises to the cytoplasm. It catalyses the reaction 5-[(5-phospho-1-deoxy-D-ribulos-1-ylimino)methylamino]-1-(5-phospho-beta-D-ribosyl)imidazole-4-carboxamide + L-glutamine = D-erythro-1-(imidazol-4-yl)glycerol 3-phosphate + 5-amino-1-(5-phospho-beta-D-ribosyl)imidazole-4-carboxamide + L-glutamate + H(+). The enzyme catalyses L-glutamine + H2O = L-glutamate + NH4(+). The protein operates within amino-acid biosynthesis; L-histidine biosynthesis; L-histidine from 5-phospho-alpha-D-ribose 1-diphosphate: step 5/9. IGPS catalyzes the conversion of PRFAR and glutamine to IGP, AICAR and glutamate. The HisH subunit catalyzes the hydrolysis of glutamine to glutamate and ammonia as part of the synthesis of IGP and AICAR. The resulting ammonia molecule is channeled to the active site of HisF. In Salmonella choleraesuis (strain SC-B67), this protein is Imidazole glycerol phosphate synthase subunit HisH.